The primary structure comprises 298 residues: Lipoyl synthase (298 aa).

7 residues coordinate [4Fe-4S] cluster: C40, C45, C51, C67, C71, C74, and S280. Residues 53–269 (AVRRTATFMI…KEIALSKGFS (217 aa)) enclose the Radical SAM core domain.

This sequence belongs to the radical SAM superfamily. Lipoyl synthase family. [4Fe-4S] cluster is required as a cofactor.

The protein resides in the cytoplasm. The catalysed reaction is [[Fe-S] cluster scaffold protein carrying a second [4Fe-4S](2+) cluster] + N(6)-octanoyl-L-lysyl-[protein] + 2 oxidized [2Fe-2S]-[ferredoxin] + 2 S-adenosyl-L-methionine + 4 H(+) = [[Fe-S] cluster scaffold protein] + N(6)-[(R)-dihydrolipoyl]-L-lysyl-[protein] + 4 Fe(3+) + 2 hydrogen sulfide + 2 5'-deoxyadenosine + 2 L-methionine + 2 reduced [2Fe-2S]-[ferredoxin]. The protein operates within protein modification; protein lipoylation via endogenous pathway; protein N(6)-(lipoyl)lysine from octanoyl-[acyl-carrier-protein]. Catalyzes the radical-mediated insertion of two sulfur atoms into the C-6 and C-8 positions of the octanoyl moiety bound to the lipoyl domains of lipoate-dependent enzymes, thereby converting the octanoylated domains into lipoylated derivatives. This Geobacillus thermodenitrificans (strain NG80-2) protein is Lipoyl synthase.